The primary structure comprises 136 residues: Large ribosomal subunit protein uL16 (136 aa).

Belongs to the universal ribosomal protein uL16 family. In terms of assembly, part of the 50S ribosomal subunit.

Its function is as follows. Binds 23S rRNA and is also seen to make contacts with the A and possibly P site tRNAs. This is Large ribosomal subunit protein uL16 from Shewanella denitrificans (strain OS217 / ATCC BAA-1090 / DSM 15013).